We begin with the raw amino-acid sequence, 37 residues long: TFIDVDCTVSKECWAPCKAAFGVDRGKCMGKKCKCYV.

Intrachain disulfides connect cysteine 7–cysteine 28, cysteine 13–cysteine 33, and cysteine 17–cysteine 35.

Belongs to the short scorpion toxin superfamily. Potassium channel inhibitor family. Alpha-KTx 01 subfamily. Expressed by the venom gland.

It localises to the secreted. Reversibly blocks the high conductance calcium-activated potassium channels composed of only alpha subunits (KCa1.1/KCNMA1). Unreversibly blocks the high conductance calcium-activated potassium channels composed of alpha and beta1 subunits (KCNMA1 and KCNMB1). Unreversibly and weakly blocks the high conductance calcium-activated potassium channels composed of alpha and beta4 (KCNMA1 and KCNMB4). The chain is Potassium channel toxin alpha-KTx 1.11 from Centruroides noxius (Mexican scorpion).